Consider the following 476-residue polypeptide: MDAHSRFAPRLPGPAINPIVDNSDEPQPSLSDLHDFEPKLEFDDTELLAPSPLEKDVMVGDFVLAEDPELEPEEDVNPLEDDFEDQLREQSENFQTPRNKCDFLGTDKQGRHIFGIYASRFPEKSQLEGFVREIIKEIEPFVENDYILVYFHQGLKEDNKPSAQFLWNSYKELDRNFRKNLKTLYVVHPTWFIRVIWNFFSPFISDKFRKKLVYISSLDELRQALGLNKLKLPDNICDLDDKLNPSRKPSTPPPSSNINASRQQQHKMATTHQFGVPLKFIVMNSPCLNSIPPIVRKCVDSLSITGVIDTEGIFRRSGNHSEIMALKERVNRGEDVDLKSVNVHVIAGLLKSFLRDLAEPLLTFELYEDVTGFLDWPKEERSRNVTQLIREKLPEENYELFKYIVEFLVRVMDCEDLNKMTSSNLAIVFGPNFLWSRSTSTSLEEIAPINAFVDFVLQNHKDIYLIDVNQRTVSVD.

Disordered regions lie at residues 1–35 (MDAH…DLHD) and 241–266 (DKLN…QQQH). Phosphoserine occurs at positions 29 and 31. The CRAL-TRIO domain occupies 91 to 244 (SENFQTPRNK…NICDLDDKLN (154 aa)). The residue at position 251 (T251) is a Phosphothreonine. Residues 257–266 (NINASRQQQH) are compositionally biased toward polar residues. The region spanning 276 to 464 (VPLKFIVMNS…FVLQNHKDIY (189 aa)) is the Rho-GAP domain.

Functions as a GTPase-activating protein (GAP) for RhoA/Rho1 during gastrulation by converting it to an inactive GDP-bound state. This chain is Rho GTPase-activating protein 68F (RhoGAP68F), found in Drosophila melanogaster (Fruit fly).